A 148-amino-acid chain; its full sequence is Putative antiporter subunit mnhG2 (148 aa).

Helical transmembrane passes span 11–31 (IAAI…IGLI), 51–71 (VLLT…YLSV), and 72–92 (RLIL…HLIS). Residues 125–148 (EQLKQRAHEREERRRKTYEKEHDY) form a disordered region. Positions 127–148 (LKQRAHEREERRRKTYEKEHDY) are enriched in basic and acidic residues.

Belongs to the CPA3 antiporters (TC 2.A.63) subunit G family. As to quaternary structure, may form a heterooligomeric complex that consists of seven subunits: mnhA2, mnhB2, mnhC2, mnhD2, mnhE2, mnhF2 and mnhG2.

The protein resides in the cell membrane. In Staphylococcus saprophyticus subsp. saprophyticus (strain ATCC 15305 / DSM 20229 / NCIMB 8711 / NCTC 7292 / S-41), this protein is Putative antiporter subunit mnhG2 (mnhG2).